The primary structure comprises 303 residues: Ribosomal protein L11 methyltransferase (303 aa).

Thr-144, Gly-165, Asp-187, and Asn-235 together coordinate S-adenosyl-L-methionine.

The protein belongs to the methyltransferase superfamily. PrmA family.

The protein localises to the cytoplasm. It catalyses the reaction L-lysyl-[protein] + 3 S-adenosyl-L-methionine = N(6),N(6),N(6)-trimethyl-L-lysyl-[protein] + 3 S-adenosyl-L-homocysteine + 3 H(+). Methylates ribosomal protein L11. In Prochlorococcus marinus (strain AS9601), this protein is Ribosomal protein L11 methyltransferase.